A 158-amino-acid polypeptide reads, in one-letter code: Transcription elongation factor GreB (158 aa).

The protein belongs to the GreA/GreB family. GreB subfamily.

Functionally, necessary for efficient RNA polymerase transcription elongation past template-encoded arresting sites. The arresting sites in DNA have the property of trapping a certain fraction of elongating RNA polymerases that pass through, resulting in locked ternary complexes. Cleavage of the nascent transcript by cleavage factors such as GreA or GreB allows the resumption of elongation from the new 3'terminus. GreB releases sequences of up to 9 nucleotides in length. This chain is Transcription elongation factor GreB, found in Escherichia coli (strain K12).